The chain runs to 79 residues: Acyl carrier protein (79 aa).

In terms of domain architecture, Carrier spans 2–77; the sequence is SDIEARVKKI…LAIDYAKNNV (76 aa). The residue at position 37 (S37) is an O-(pantetheine 4'-phosphoryl)serine.

It belongs to the acyl carrier protein (ACP) family. In terms of processing, 4'-phosphopantetheine is transferred from CoA to a specific serine of apo-ACP by AcpS. This modification is essential for activity because fatty acids are bound in thioester linkage to the sulfhydryl of the prosthetic group.

It is found in the cytoplasm. The protein operates within lipid metabolism; fatty acid biosynthesis. Its function is as follows. Carrier of the growing fatty acid chain in fatty acid biosynthesis. The polypeptide is Acyl carrier protein (Leptothrix cholodnii (strain ATCC 51168 / LMG 8142 / SP-6) (Leptothrix discophora (strain SP-6))).